The sequence spans 31 residues: Malate dehydrogenase, mitochondrial (31 aa).

NAD(+) contacts are provided by residues 9–19 (GIGQPLSLLMK) and 20–31 (DDLFNINAGIVK).

The protein belongs to the LDH/MDH superfamily. MDH type 1 family. As to quaternary structure, homodimer.

It is found in the mitochondrion matrix. The enzyme catalyses (S)-malate + NAD(+) = oxaloacetate + NADH + H(+). The protein is Malate dehydrogenase, mitochondrial of Imperata cylindrica (Cogon grass).